The primary structure comprises 395 residues: Elongation factor Ts, mitochondrial (395 aa).

A mitochondrion-targeting transit peptide spans 1–63; that stretch reads MAFARAVRRP…RGFGNFIRSF (63 aa).

It belongs to the EF-Ts family.

Its subcellular location is the mitochondrion. Its function is as follows. Associates with the EF-Tu.GDP complex and induces the exchange of GDP to GTP. It remains bound to the aminoacyl-tRNA.EF-Tu.GTP complex up to the GTP hydrolysis stage on the ribosome. This Arabidopsis thaliana (Mouse-ear cress) protein is Elongation factor Ts, mitochondrial.